The following is an 85-amino-acid chain: UPF0335 protein BQ12070 (85 aa).

It belongs to the UPF0335 family.

This Bartonella quintana (strain Toulouse) (Rochalimaea quintana) protein is UPF0335 protein BQ12070.